The chain runs to 469 residues: Uronate isomerase (469 aa).

It belongs to the metallo-dependent hydrolases superfamily. Uronate isomerase family.

It catalyses the reaction D-glucuronate = D-fructuronate. The catalysed reaction is aldehydo-D-galacturonate = keto-D-tagaturonate. It functions in the pathway carbohydrate metabolism; pentose and glucuronate interconversion. This Mesorhizobium japonicum (strain LMG 29417 / CECT 9101 / MAFF 303099) (Mesorhizobium loti (strain MAFF 303099)) protein is Uronate isomerase.